The chain runs to 530 residues: B3 domain-containing protein REM-like 3 (530 aa).

DNA-binding regions (TF-B3) lie at residues 11–103 (KPHF…FGLS) and 144–241 (DFVV…FPLE). The segment at 251-276 (SKKVKQEVEHEESVKEETNVESGKLK) is disordered. Positions 254-276 (VKQEVEHEESVKEETNVESGKLK) are enriched in basic and acidic residues. DNA-binding regions (TF-B3) lie at residues 296–393 (NFVV…FPLE) and 431–530 (SFVV…WDKK).

It is found in the nucleus. This chain is B3 domain-containing protein REM-like 3, found in Arabidopsis thaliana (Mouse-ear cress).